A 350-amino-acid polypeptide reads, in one-letter code: Cytochrome c biogenesis protein CcsA (350 aa).

Transmembrane regions (helical) follow at residues 23–43 (NVAFAISLGAMLFYWGGAAFP), 47–67 (LLAELGLAGMIGANLTMAALL), 82–102 (LYESLFFLAWGITALHLLALH), 108–128 (WVGVMTAPVVTGIVAFAALVL), 153–173 (VMLLAYAALLVGSLLSISFLI), 258–278 (LIGLGFPLLTIGIIAGAVWAN), 293–313 (WALITWLVFAAYLHARITKGW), and 319–339 (ALLASLGFGVVWVCYLGVNFL).

The protein belongs to the CcmF/CycK/Ccl1/NrfE/CcsA family. In terms of assembly, may interact with ccs1.

It is found in the cellular thylakoid membrane. Functionally, required during biogenesis of c-type cytochromes (cytochrome c6 and cytochrome f) at the step of heme attachment. In Synechococcus sp. (strain JA-2-3B'a(2-13)) (Cyanobacteria bacterium Yellowstone B-Prime), this protein is Cytochrome c biogenesis protein CcsA.